We begin with the raw amino-acid sequence, 522 residues long: Sulfite reductase [NADPH] flavoprotein alpha-component (522 aa).

The Flavodoxin-like domain maps to 60 to 198; the sequence is ITILFGSQTG…DTERWSSDAL (139 aa). The disordered stretch occupies residues 217–242; sequence TLRSHQDLRSHQEQSRNRARPYDKDN. The span at 220-242 shows a compositional bias: basic and acidic residues; the sequence is SHQDLRSHQEQSRNRARPYDKDN. The region spanning 241–399 is the FAD-binding FR-type domain; sequence DNPYTATLLE…VAPYRAFLQQ (159 aa).

In terms of assembly, alpha(8)-beta(8). The alpha component is a flavoprotein, the beta component is a hemoprotein. FAD serves as cofactor. The cofactor is FMN.

The catalysed reaction is hydrogen sulfide + 3 NADP(+) + 3 H2O = sulfite + 3 NADPH + 4 H(+). In terms of biological role, catalyzes the 6-electron reduction of sulfite to sulfide. This is one of several activities required for the biosynthesis of L-cysteine from sulfate. The flavo-protein component catalyzes the electron flow from NADPH -&gt; FAD -&gt; FMN to the hemoprotein component. This chain is Sulfite reductase [NADPH] flavoprotein alpha-component (cysJ), found in Thiocapsa roseopersicina.